Consider the following 384-residue polypeptide: S-adenosylmethionine synthase (384 aa).

An ATP-binding site is contributed by His-15. Asp-17 contributes to the Mg(2+) binding site. Glu-43 contacts K(+). Glu-56 and Gln-99 together coordinate L-methionine. A flexible loop region spans residues 99–109 (QSPDINQGVDR). ATP-binding positions include 164-166 (DAK), 230-231 (RF), Asp-239, 245-246 (RK), Ala-262, and Lys-266. Asp-239 contacts L-methionine. Lys-270 contributes to the L-methionine binding site.

This sequence belongs to the AdoMet synthase family. As to quaternary structure, homotetramer; dimer of dimers. It depends on Mg(2+) as a cofactor. Requires K(+) as cofactor.

The protein localises to the cytoplasm. It carries out the reaction L-methionine + ATP + H2O = S-adenosyl-L-methionine + phosphate + diphosphate. The protein operates within amino-acid biosynthesis; S-adenosyl-L-methionine biosynthesis; S-adenosyl-L-methionine from L-methionine: step 1/1. Its function is as follows. Catalyzes the formation of S-adenosylmethionine (AdoMet) from methionine and ATP. The overall synthetic reaction is composed of two sequential steps, AdoMet formation and the subsequent tripolyphosphate hydrolysis which occurs prior to release of AdoMet from the enzyme. The chain is S-adenosylmethionine synthase from Klebsiella pneumoniae (strain 342).